A 997-amino-acid chain; its full sequence is Mannuronan C5-epimerase AlgE5 (997 aa).

PbH1 repeat units follow at residues 133–155 (DRDV…DPHE), 157–179 (TINL…VADF), 180–202 (QIGG…NIVT), 204–226 (TNDF…VIQR), 257–279 (AHDV…RVYG), 280–315 (AEDV…GVSG), and 320–359 (TTGT…SVSN). Hemolysin-type calcium-binding repeat units lie at residues 388 to 403 (GTTG…AHET), 406 to 422 (GLDG…NDIL), 424 to 439 (GGAG…GADL), 557 to 573 (GHAG…DDIL), 574 to 590 (VGGA…GADL), 695 to 709 (GSAG…AADE), 712 to 729 (HGGA…ADVF), 828 to 839 (GSDGNDTLDGGS), 846 to 862 (GGAG…NDIL), and 864 to 880 (GGAG…SDIF).

Belongs to the D-mannuronate C5-epimerase family. The cofactor is Ca(2+).

The protein resides in the secreted. The enzyme catalyses [(1-&gt;4)-beta-D-mannuronosyl](n) = [alginate](n). The protein operates within glycan biosynthesis; alginate biosynthesis. Inhibited by zinc. Converts beta-D-mannuronic acid (M) to alpha-L-guluronic acid (G), producing a polymer with gel-forming capacity, required for the formation of the cyst coat. In Azotobacter vinelandii, this protein is Mannuronan C5-epimerase AlgE5.